Reading from the N-terminus, the 419-residue chain is Mitochondrial chaperone BCS1 (419 aa).

The Mitochondrial intermembrane segment spans residues 2 to 15 (PLSDFILALKDNPY). The helical transmembrane segment at 16–32 (FGAGFGLVGVGTALALA) threads the bilayer. Residues 33–419 (RKGVQLGLVA…AIHNAESLRR (387 aa)) are Mitochondrial matrix-facing. At Tyr181 the chain carries Phosphotyrosine. 230–237 (GPPGCGKS) is an ATP binding site.

The protein belongs to the AAA ATPase family. BCS1 subfamily. As to quaternary structure, interacts with LETM1. Ubiquitous.

Its subcellular location is the mitochondrion inner membrane. The catalysed reaction is ATP + H2O = ADP + phosphate + H(+). Its function is as follows. Chaperone necessary for the incorporation of Rieske iron-sulfur protein UQCRFS1 into the mitochondrial respiratory chain complex III. Plays an important role in the maintenance of mitochondrial tubular networks, respiratory chain assembly and formation of the LETM1 complex. This Homo sapiens (Human) protein is Mitochondrial chaperone BCS1 (BCS1L).